A 975-amino-acid polypeptide reads, in one-letter code: MASNNVAQFAAELKMPAGVLLEQLQAAGVQKASEDDALSETDKARLLDHLRKSHGATDGDKRKITLTRRHTSEIKQADATGKARTIQVEVRKKRTFVKRDDVSETGADQAQAQTDEQAEAELKRREEEARREAELLEKQAQELRERQERLEREEAERRAREEAAEAERRRAEEEAAAKRAAAAQAEAAQQAAAAREQAQRAQSEPAEQSAQDEARAAAERAAQREAAKKAEDAAREAADKARAEQEEIRKRREAAEAEARAIREMMNTPRRAQVKAVEPPKPAEPPAAKAAEAKGTLHKPAKPAGEAAAARPAAKKPASGAPAPAAAPAGDRTKKPGTGKSGWQDDAAKRRGIKTRGDSSGGVDRGWRGGPKGRGKHQDSASSFQAPTEPIVREVHVPETISVADLAHKMSIKASEVIKVMMKMGQMVTINQVLDQETAMIVVEELGHRALAAKLDDPEALLVEGEIGSDAEQLPRPPVVTVMGHVDHGKTSLLDYIRRAKVAAGEAGGITQHIGAYHVETPRGVVTFLDTPGHEAFTAMRARGAKATDIVILVVAADDGVMPQTKEAISHAKAGGVPIVVAINKIDKPEANPDRVKQELVAEGVVPEEYGGDSPFVPVSAKTGAGIDDLLENVLLQAEVLELKAPVESPAKGIVIEAKLDKGKGPVATVLVQSGTLSRGDVVLAGTAYGRVRAMLDENGKPTKEAGPSIPVEIQGLSEVPGAGDEVIVLPDERKAREIALFRQGKFRDVKLAKQQAAKLESMLEQMGEGEVQNLPLIIKADVQGSQEALVQSLLKLSTDEVRVQIVHSAVGGISESDVNLATASKAVIIGFNTRADAQARKLAEANGIDIRYYNIIYDAVDEVKAAMSGMLAPEKREVVTGMVEVRQVFKVPKVGTVAGCMVTDGVVKRSSSVRVLRNNVVIFTGELDSLKRFKDDVKEVKQGFECGMSLKNFNDIVEGDQFEVFEVTEVARTL.

Positions 48–63 (DHLRKSHGATDGDKRK) are enriched in basic and acidic residues. Disordered regions lie at residues 48–84 (DHLR…GKAR) and 98–388 (KRDD…QAPT). Residues 104–115 (ETGADQAQAQTD) show a composition bias toward low complexity. Positions 120-177 (AELKRREEEARREAELLEKQAQELRERQERLEREEAERRAREEAAEAERRRAEEEAAA) are enriched in basic and acidic residues. Positions 178–211 (KRAAAAQAEAAQQAAAAREQAQRAQSEPAEQSAQ) are enriched in low complexity. The segment covering 212–263 (DEARAAAERAAQREAAKKAEDAAREAADKARAEQEEIRKRREAAEAEARAIR) has biased composition (basic and acidic residues). The segment covering 302 to 330 (KPAGEAAAARPAAKKPASGAPAPAAAPAG) has biased composition (low complexity). Over residues 359–372 (SSGGVDRGWRGGPK) the composition is skewed to gly residues. In terms of domain architecture, tr-type G spans 475–644 (PRPPVVTVMG…LLQAEVLELK (170 aa)). The G1 stretch occupies residues 484–491 (GHVDHGKT). 484 to 491 (GHVDHGKT) lines the GTP pocket. Positions 509 to 513 (GITQH) are G2. The interval 530–533 (DTPG) is G3. GTP contacts are provided by residues 530-534 (DTPGH) and 584-587 (NKID). The segment at 584 to 587 (NKID) is G4. The tract at residues 620–622 (SAK) is G5.

This sequence belongs to the TRAFAC class translation factor GTPase superfamily. Classic translation factor GTPase family. IF-2 subfamily.

It localises to the cytoplasm. One of the essential components for the initiation of protein synthesis. Protects formylmethionyl-tRNA from spontaneous hydrolysis and promotes its binding to the 30S ribosomal subunits. Also involved in the hydrolysis of GTP during the formation of the 70S ribosomal complex. The protein is Translation initiation factor IF-2 of Burkholderia mallei (strain NCTC 10247).